The sequence spans 194 residues: Interferon alpha (194 aa).

The signal sequence occupies residues 1 to 23; sequence MALPSSFLVALVALGCNSVCSLG. 2 disulfide bridges follow: C24-C123 and C52-C166. N102 carries an N-linked (GlcNAc...) asparagine glycan.

It belongs to the alpha/beta interferon family.

It is found in the secreted. Functionally, produced by macrophages, IFN-alpha have antiviral activities. Interferon stimulates the production of two enzymes: a protein kinase and an oligoadenylate synthetase. In Felis catus (Cat), this protein is Interferon alpha.